Here is a 300-residue protein sequence, read N- to C-terminus: Probable mitochondrial 2-oxodicarboxylate carrier (300 aa).

The segment at 1-20 is disordered; it reads MTSKGNAGNPPTPTPAPVKS. 3 Solcar repeats span residues 21-104, 114-200, and 209-295; these read QPLW…YEKQ, PTQM…IKSA, and GVLV…VMKL. A run of 6 helical transmembrane segments spans residues 27–47, 74–93, 120–140, 171–191, 209–229, and 278–298; these read LVSG…LDVV, LKMY…KRAI, IGSG…FELV, GFFK…GGYF, GVLV…TMLN, and LGPG…LLAG.

It belongs to the mitochondrial carrier (TC 2.A.29) family.

Its subcellular location is the mitochondrion inner membrane. It catalyses the reaction 2-oxoadipate(in) + 2-oxoglutarate(out) = 2-oxoadipate(out) + 2-oxoglutarate(in). The enzyme catalyses hexanedioate(in) + 2-oxoglutarate(out) = hexanedioate(out) + 2-oxoglutarate(in). It carries out the reaction L-2-aminoadipate(in) + 2-oxoglutarate(out) = L-2-aminoadipate(out) + 2-oxoglutarate(in). The catalysed reaction is glutarate(in) + 2-oxoglutarate(out) = glutarate(out) + 2-oxoglutarate(in). It catalyses the reaction 2-oxoheptanedioate(in) + 2-oxoglutarate(out) = 2-oxoheptanedioate(out) + 2-oxoglutarate(in). The enzyme catalyses heptanedioate(in) + 2-oxoglutarate(out) = heptanedioate(out) + 2-oxoglutarate(in). It carries out the reaction citrate(in) + 2-oxoglutarate(out) = citrate(out) + 2-oxoglutarate(in). In terms of biological role, transports dicarboxylates across the inner membranes of mitochondria by a counter-exchange mechanism. Can transport 2-oxoadipate (2-oxohexanedioate), 2-oxoglutarate, adipate (hexanedioate), glutarate, and to a lesser extent, pimelate (heptanedioate), 2-oxopimelate (2-oxoheptanedioate), 2-aminoadipate (2-aminohexanedioate), oxaloacetate, and citrate. Plays a central role in catabolism of lysine, hydroxylysine, and tryptophan, by transporting common metabolite intermediates (such as 2-oxoadipate) into the mitochondria, where it is converted into acetyl-CoA and can enter the citric acid (TCA) cycle. This Dictyostelium discoideum (Social amoeba) protein is Probable mitochondrial 2-oxodicarboxylate carrier (mcfT).